The primary structure comprises 31 residues: Aspartate racemase (31 aa).

A disordered region spans residues 1–31 (PVAPEYLFKKEEDKGANKEEEEVAPELGIRA). Positions 7 to 18 (LFKKEEDKGANK) are enriched in basic and acidic residues.

The protein belongs to the aspartate/glutamate racemases family. It depends on pyridoxal 5'-phosphate as a cofactor.

It carries out the reaction L-aspartate = D-aspartate. Inhibited by hydroxylamine, aminooxyacetate, phenylhydrazine and sodium borohydride. Highly specific toward aspartate and entirely inactive on glutamate, alanine and serine. This Anadara broughtonii (Blood clam) protein is Aspartate racemase.